Reading from the N-terminus, the 360-residue chain is Homoserine O-succinyltransferase (360 aa).

Cys146 (acyl-thioester intermediate) is an active-site residue. Substrate is bound by residues Lys167 and Ser196. The Proton acceptor role is filled by His239. Glu241 is an active-site residue. Substrate is bound at residue Arg253.

The protein belongs to the MetA family.

Its subcellular location is the cytoplasm. It carries out the reaction L-homoserine + succinyl-CoA = O-succinyl-L-homoserine + CoA. Its pathway is amino-acid biosynthesis; L-methionine biosynthesis via de novo pathway; O-succinyl-L-homoserine from L-homoserine: step 1/1. Its function is as follows. Transfers a succinyl group from succinyl-CoA to L-homoserine, forming succinyl-L-homoserine. In vitro, can also use glutaryl-CoA as acyl donor. The sequence is that of Homoserine O-succinyltransferase from Thiothrix nivea (strain ATCC 35100 / DSM 5205 / JP2).